A 222-amino-acid chain; its full sequence is Pectate lyase A (222 aa).

The signal sequence occupies residues 1 to 26; that stretch reads MKKMLTLLLSAGLVASIFGVMPAAAA.

This sequence belongs to the polysaccharide lyase 3 family. Ca(2+) serves as cofactor.

The protein localises to the secreted. It catalyses the reaction Eliminative cleavage of (1-&gt;4)-alpha-D-galacturonan to give oligosaccharides with 4-deoxy-alpha-D-galact-4-enuronosyl groups at their non-reducing ends.. It carries out the reaction Eliminative cleavage of (1-&gt;4)-alpha-D-galacturonan methyl ester to give oligosaccharides with 4-deoxy-6-O-methyl-alpha-D-galact-4-enuronosyl groups at their non-reducing ends.. The protein operates within glycan metabolism; pectin degradation. Catalyzes the depolymerization of both polygalacturonate and pectins with low (20-34%) and high (90%) levels of methyl esterification, with an endo mode of action. In contrast to the majority of pectate lyases, displays high activity on highly methylated pectins. Does not show xylanase and cellulase activity. The sequence is that of Pectate lyase A from Paenibacillus amylolyticus.